We begin with the raw amino-acid sequence, 79 residues long: Protein RALF-like 35 (79 aa).

An N-terminal signal peptide occupies residues 1-29 (MAAHKMSLTSLFFVSIVIVLSLFSGFGEG). Cystine bridges form between Cys45/Cys52 and Cys66/Cys72. N-linked (GlcNAc...) asparagine glycosylation occurs at Asn68.

It belongs to the plant rapid alkalinization factor (RALF) family.

The protein localises to the secreted. Cell signaling peptide that may regulate plant stress, growth, and development. Mediates a rapid alkalinization of extracellular space by mediating a transient increase in the cytoplasmic Ca(2+) concentration leading to a calcium-dependent signaling events through a cell surface receptor and a concomitant activation of some intracellular mitogen-activated protein kinases. The sequence is that of Protein RALF-like 35 from Arabidopsis thaliana (Mouse-ear cress).